The sequence spans 1026 residues: Cadherin-like and PC-esterase domain-containing protein 1 (1026 aa).

Positions methionine 1–threonine 34 are cleaved as a signal peptide. N-linked (GlcNAc...) asparagine glycans are attached at residues asparagine 251, asparagine 404, asparagine 413, asparagine 737, asparagine 791, and asparagine 985.

Belongs to the PC-esterase family.

In Homo sapiens (Human), this protein is Cadherin-like and PC-esterase domain-containing protein 1 (CPED1).